We begin with the raw amino-acid sequence, 174 residues long: Crossover junction endodeoxyribonuclease RuvC (174 aa).

Catalysis depends on residues Asp-8, Glu-67, and Asp-139. Asp-8, Glu-67, and Asp-139 together coordinate Mg(2+).

This sequence belongs to the RuvC family. In terms of assembly, homodimer which binds Holliday junction (HJ) DNA. The HJ becomes 2-fold symmetrical on binding to RuvC with unstacked arms; it has a different conformation from HJ DNA in complex with RuvA. In the full resolvosome a probable DNA-RuvA(4)-RuvB(12)-RuvC(2) complex forms which resolves the HJ. The cofactor is Mg(2+).

Its subcellular location is the cytoplasm. The catalysed reaction is Endonucleolytic cleavage at a junction such as a reciprocal single-stranded crossover between two homologous DNA duplexes (Holliday junction).. Its function is as follows. The RuvA-RuvB-RuvC complex processes Holliday junction (HJ) DNA during genetic recombination and DNA repair. Endonuclease that resolves HJ intermediates. Cleaves cruciform DNA by making single-stranded nicks across the HJ at symmetrical positions within the homologous arms, yielding a 5'-phosphate and a 3'-hydroxyl group; requires a central core of homology in the junction. The consensus cleavage sequence is 5'-(A/T)TT(C/G)-3'. Cleavage occurs on the 3'-side of the TT dinucleotide at the point of strand exchange. HJ branch migration catalyzed by RuvA-RuvB allows RuvC to scan DNA until it finds its consensus sequence, where it cleaves and resolves the cruciform DNA. The chain is Crossover junction endodeoxyribonuclease RuvC from Pseudomonas savastanoi pv. phaseolicola (strain 1448A / Race 6) (Pseudomonas syringae pv. phaseolicola (strain 1448A / Race 6)).